Consider the following 233-residue polypeptide: DnaA regulatory inactivator Hda (233 aa).

It belongs to the DnaA family. HdA subfamily. The active form seems to be an ADP-bound monomer. Forms the RIDA complex (regulatory inactivation of DnaA) of ATP-DnaA, ADP-Hda and the DNA-loaded beta sliding clamp (dnaN).

Functionally, mediates the interaction of DNA replication initiator protein DnaA with DNA polymerase subunit beta sliding clamp (dnaN). Stimulates hydrolysis of ATP-DnaA to ADP-DnaA, rendering DnaA inactive for reinitiation, a process called regulatory inhibition of DnaA or RIDA. The protein is DnaA regulatory inactivator Hda of Shigella boydii serotype 4 (strain Sb227).